Reading from the N-terminus, the 107-residue chain is U1-lycotoxin-Ls1b (107 aa).

The N-terminal stretch at M1–G20 is a signal peptide. The propeptide occupies E21–R41. 4 disulfide bridges follow: C44–C59, C51–C68, C58–C86, and C70–C84.

Belongs to the neurotoxin 19 (CSTX) family. 04 (U1-Lctx) subfamily. In terms of tissue distribution, expressed by the venom gland.

It is found in the secreted. This chain is U1-lycotoxin-Ls1b, found in Lycosa singoriensis (Wolf spider).